Here is a 110-residue protein sequence, read N- to C-terminus: MSLEKTTRMNYLFDFYQSLLTSKQKSYMSLYYLDDFSLGEIAEEYEVSRQAVYDNIKRTEAMLEQYEEKLLLLKKFQERKEMFNKLKELASGSKEEEEITALIEALEKLD.

Belongs to the UPF0122 family.

Its function is as follows. Might take part in the signal recognition particle (SRP) pathway. This is inferred from the conservation of its genetic proximity to ftsY/ffh. May be a regulatory protein. This Bacillus subtilis (strain 168) protein is UPF0122 protein YlxM (ylxM).